A 191-amino-acid chain; its full sequence is Signal peptidase complex catalytic subunit sec11 (191 aa).

Topologically, residues 1-18 (MLSFLSSNLSNVRQSLAQ) are cytoplasmic. Residues 19 to 39 (VLNFALVLSTAFMMWKGLSVF) traverse the membrane as a helical; Signal-anchor for type II membrane protein segment. Residues 40–191 (TASSSPVVVV…MGLMVMLQRE (152 aa)) lie on the Lumenal side of the membrane. Active-site charge relay system residues include S53, H92, and D133. Residues 177–188 (ALLGIMGLMVML) are C-terminal short (CTS) helix.

This sequence belongs to the peptidase S26B family. Component of the signal peptidase complex (SPC) composed of a catalytic subunit SEC11 and three accessory subunits SPC1, SPC2 and SPC3. The complex induces a local thinning of the ER membrane which is used to measure the length of the signal peptide (SP) h-region of protein substrates. This ensures the selectivity of the complex towards h-regions shorter than 18-20 amino acids. SPC associates with the translocon complex.

It localises to the endoplasmic reticulum membrane. The catalysed reaction is Cleavage of hydrophobic, N-terminal signal or leader sequences from secreted and periplasmic proteins.. In terms of biological role, catalytic component of the signal peptidase complex (SPC) which catalyzes the cleavage of N-terminal signal sequences from nascent proteins as they are translocated into the lumen of the endoplasmic reticulum. Specifically cleaves N-terminal signal peptides that contain a hydrophobic alpha-helix (h-region) shorter than 18-20 amino acids. The protein is Signal peptidase complex catalytic subunit sec11 (sec11) of Aspergillus oryzae (strain ATCC 42149 / RIB 40) (Yellow koji mold).